The following is a 143-amino-acid chain: MESTLGSDLARLVRVWRALIDQRLKPLELTQTHWVTLYNIHRLPPEQSQIQLAKAIGIEQPSLVRTLDQLEDKGLITRHTCANDRRAKRIKLTDGAEPVIREVADVISLTRCEILDGISADEVSLLANLIERLEQNIIHLQNK.

Positions 2–135 constitute an HTH marR-type domain; the sequence is ESTLGSDLAR…LANLIERLEQ (134 aa). Residues 49–72 constitute a DNA-binding region (H-T-H motif); that stretch reads QIQLAKAIGIEQPSLVRTLDQLED.

Belongs to the SlyA family. As to quaternary structure, homodimer.

Its function is as follows. Transcription regulator that can specifically activate or repress expression of target genes. The protein is Transcriptional regulator SlyA of Edwardsiella ictaluri (strain 93-146).